The sequence spans 441 residues: Ribosomal protein uS12 methylthiotransferase RimO (441 aa).

The 111-residue stretch at proline 7–proline 117 folds into the MTTase N-terminal domain. Positions 16, 52, 81, 148, 152, and 155 each coordinate [4Fe-4S] cluster. Residues leucine 134 to arginine 371 enclose the Radical SAM core domain. Residues lysine 374 to glycine 440 enclose the TRAM domain.

The protein belongs to the methylthiotransferase family. RimO subfamily. [4Fe-4S] cluster is required as a cofactor.

The protein resides in the cytoplasm. It carries out the reaction L-aspartate(89)-[ribosomal protein uS12]-hydrogen + (sulfur carrier)-SH + AH2 + 2 S-adenosyl-L-methionine = 3-methylsulfanyl-L-aspartate(89)-[ribosomal protein uS12]-hydrogen + (sulfur carrier)-H + 5'-deoxyadenosine + L-methionine + A + S-adenosyl-L-homocysteine + 2 H(+). Functionally, catalyzes the methylthiolation of an aspartic acid residue of ribosomal protein uS12. This chain is Ribosomal protein uS12 methylthiotransferase RimO, found in Rhodopseudomonas palustris (strain BisB5).